Reading from the N-terminus, the 481-residue chain is Protein nucleotidyltransferase YdiU (481 aa).

The ATP site is built by G85, G87, R88, K108, D120, G121, R172, and R179. D248 serves as the catalytic Proton acceptor. Positions 249 and 258 each coordinate Mg(2+). D258 is an ATP binding site.

It belongs to the SELO family. The cofactor is Mg(2+). It depends on Mn(2+) as a cofactor.

The catalysed reaction is L-seryl-[protein] + ATP = 3-O-(5'-adenylyl)-L-seryl-[protein] + diphosphate. It carries out the reaction L-threonyl-[protein] + ATP = 3-O-(5'-adenylyl)-L-threonyl-[protein] + diphosphate. It catalyses the reaction L-tyrosyl-[protein] + ATP = O-(5'-adenylyl)-L-tyrosyl-[protein] + diphosphate. The enzyme catalyses L-histidyl-[protein] + UTP = N(tele)-(5'-uridylyl)-L-histidyl-[protein] + diphosphate. The catalysed reaction is L-seryl-[protein] + UTP = O-(5'-uridylyl)-L-seryl-[protein] + diphosphate. It carries out the reaction L-tyrosyl-[protein] + UTP = O-(5'-uridylyl)-L-tyrosyl-[protein] + diphosphate. Nucleotidyltransferase involved in the post-translational modification of proteins. It can catalyze the addition of adenosine monophosphate (AMP) or uridine monophosphate (UMP) to a protein, resulting in modifications known as AMPylation and UMPylation. In Cereibacter sphaeroides (strain ATCC 17025 / ATH 2.4.3) (Rhodobacter sphaeroides), this protein is Protein nucleotidyltransferase YdiU.